The following is a 113-amino-acid chain: Chaperone protein SigE (113 aa).

This sequence belongs to the IpgE/SigE chaperone family. As to quaternary structure, homodimer or higher-order oligomers.

It is found in the cytoplasm. Its function is as follows. Molecular chaperone required for SopB/SigD stabilization and secretion. The chain is Chaperone protein SigE (sigE) from Salmonella paratyphi A (strain ATCC 9150 / SARB42).